The following is a 59-amino-acid chain: Chromatin protein Cren7 (59 aa).

Belongs to the Cren7 family. As to quaternary structure, monomer. In terms of processing, methylated at multiple sites, to varying extents.

It localises to the chromosome. It is found in the cytoplasm. Functionally, a chromatin protein, binds double-stranded DNA without sequence specificity. Constrains negative DNA supercoils. The polypeptide is Chromatin protein Cren7 (Sulfolobus acidocaldarius (strain ATCC 33909 / DSM 639 / JCM 8929 / NBRC 15157 / NCIMB 11770)).